Reading from the N-terminus, the 82-residue chain is Immediate early response 3-interacting protein 1 (82 aa).

Helical transmembrane passes span 2–22 (AFTL…IAVL) and 62–82 (VMRV…LLFG).

This sequence belongs to the YOS1 family.

Its subcellular location is the endoplasmic reticulum membrane. In terms of biological role, regulator of endoplasmic reticulum secretion that acts as a key determinant of brain size. Required for secretion of extracellular matrix proteins. Required for correct brain development by depositing sufficient extracellular matrix proteins for tissue integrity and the proliferation of neural progenitors. Acts as a regulator of the unfolded protein response (UPR). The protein is Immediate early response 3-interacting protein 1 of Rattus norvegicus (Rat).